The chain runs to 367 residues: Pentatricopeptide repeat-containing protein At1g11900 (367 aa).

PPR repeat units lie at residues 69–103 (SKIDYTNLVEKFTRDGNLSGAYDLLQSLQEKNICL), 104–139 (PISVFKNLLAAAGELNDMKLSCRVFREVLILPGKEP), 141–175 (SSDCYLNLARAFINTDDCTYLTSLLKEISESSLPY), 176–210 (RLIVMNRIIFAFAETRQIDKVLMILKEMKEWECKP), 211–241 (DVITYNSVLDILGRAGLVNEILGVLSTMKED), 247–281 (NIITYNTVLNGMRKACRFDMCLVIYNEMVQCGIEP), 282–316 (DLLSYTAVIDSLGRSGNVKESLRLFDEMKQRQIRP), and 317–347 (SVYVYRALIDCLKKSGDFQSALQLSDELKNT).

The protein belongs to the PPR family. P subfamily.

The protein is Pentatricopeptide repeat-containing protein At1g11900 of Arabidopsis thaliana (Mouse-ear cress).